Reading from the N-terminus, the 270-residue chain is Coiled-coil domain-containing protein 3 (270 aa).

Residues 1 to 21 (MLRQLLLAALCLAGPPAPARA) form the signal peptide. Residue N100 is glycosylated (N-linked (GlcNAc...) asparagine). Residues 188 to 251 (SVQKALFEEE…NQKLSEKLAA (64 aa)) adopt a coiled-coil conformation.

As to quaternary structure, homodimer. Expressed in umbilical vein endothelial cells (HUVEC), and at lower levels in aortic smooth muscle cells (HASMC).

It localises to the secreted. In terms of biological role, negatively regulates TNF-alpha-induced pro-inflammatory response in endothelial cells (ECs) via inhibition of TNF-alpha-induced NF-kappaB activation in ECs. Positively regulates lipid accumulation in adipose cells. In Homo sapiens (Human), this protein is Coiled-coil domain-containing protein 3 (CCDC3).